The following is a 366-amino-acid chain: Histidinol-phosphate aminotransferase 2 (366 aa).

Positions 1–21 (MQVKDQLSLLQPYKPGKSPEQ) are disordered. N6-(pyridoxal phosphate)lysine is present on K222.

Belongs to the class-II pyridoxal-phosphate-dependent aminotransferase family. Histidinol-phosphate aminotransferase subfamily. Homodimer. It depends on pyridoxal 5'-phosphate as a cofactor.

It carries out the reaction L-histidinol phosphate + 2-oxoglutarate = 3-(imidazol-4-yl)-2-oxopropyl phosphate + L-glutamate. It functions in the pathway amino-acid biosynthesis; L-histidine biosynthesis; L-histidine from 5-phospho-alpha-D-ribose 1-diphosphate: step 7/9. The polypeptide is Histidinol-phosphate aminotransferase 2 (Bacillus cereus (strain ZK / E33L)).